A 159-amino-acid chain; its full sequence is uncharacterized protein (159 aa).

The chain crosses the membrane as a helical span at residues 4-24 (QIALILSLIILIFFIYKFAMF).

The protein localises to the membrane. This is an uncharacterized protein from Acheta domesticus (House cricket).